A 359-amino-acid polypeptide reads, in one-letter code: Type-1 angiotensin II receptor B (359 aa).

Residues 1–25 (MILNSSIEDGIKRIQDDCPKAGRHN) are Extracellular-facing. An N-linked (GlcNAc...) asparagine glycan is attached at N4. Positions 15 and 17 each coordinate angiotensin II. 2 disulfides stabilise this stretch: C18–C274 and C101–C180. A helical membrane pass occupies residues 26–55 (YIFVMIPTLYSIIFVVGIFGNSLVVIVIYF). Over 56–61 (YMKLKT) the chain is Cytoplasmic. The helical transmembrane segment at 62-89 (VASVFLLNLALADLCFLLTLPLWAVYTA) threads the bilayer. At 90-98 (MEYQWPFGN) the chain is on the extracellular side. The helical transmembrane segment at 99–125 (HLCKIASASVSFNLYASVFLLTCLSID) threads the bilayer. The Cytoplasmic portion of the chain corresponds to 126–141 (RYLAIVHPMKSRLRRT). The helical transmembrane segment at 142 to 165 (MLVAKVTCIIIWLMAGLASLPAVI) threads the bilayer. The Extracellular portion of the chain corresponds to 166 to 190 (HRNVYFIENTNITVCAFHYESQNST). R167 contributes to the angiotensin II binding site. N-linked (GlcNAc...) asparagine glycosylation occurs at N176. 3 residues coordinate angiotensin II: F182, H183, and Y184. N188 carries N-linked (GlcNAc...) asparagine glycosylation. The chain crosses the membrane as a helical span at residues 191 to 216 (LPIGLGLTKNILGFVFPFVIILTSYT). Angiotensin II is bound at residue K199. Over 217–239 (LIWKALKKAYKIQKNTPRNDDIF) the chain is Cytoplasmic. The helical transmembrane segment at 240–268 (RIIMAIVLFFFFSWVPHQIFSFLDVLIQL) threads the bilayer. At 269–278 (GVIHDCEIAD) the chain is on the extracellular side. The chain crosses the membrane as a helical span at residues 279–304 (VVDTAMPITICIAYFNNCLNPLFYGF). Over 305–359 (LGKKFKRYFLQLLKYIPPKARSHAGLSTKMSTLSYRPSDNMSSSARKSAYCFEVE) the chain is Cytoplasmic. C355 carries S-palmitoyl cysteine lipidation.

It belongs to the G-protein coupled receptor 1 family. In terms of assembly, interacts with MAS1. Interacts with ARRB1. Interacts with FLNA (via filamin repeat 21); increases PKA-mediated phosphorylation of FLNA. C-terminal Ser or Thr residues may be phosphorylated.

It localises to the cell membrane. Functionally, receptor for angiotensin II, a vasoconstricting peptide, which acts as a key regulator of blood pressure and sodium retention by the kidney. The activated receptor in turn couples to G-alpha proteins G(q) (GNAQ, GNA11, GNA14 or GNA15) and thus activates phospholipase C and increases the cytosolic Ca(2+) concentrations, which in turn triggers cellular responses such as stimulation of protein kinase C. The protein is Type-1 angiotensin II receptor B (Agtr1b) of Mus musculus (Mouse).